Here is a 542-residue protein sequence, read N- to C-terminus: Glutamyl-tRNA(Gln) amidotransferase subunit B, mitochondrial (542 aa).

The N-terminal 66 residues, 1 to 66 (MRVFRRFYQV…PNSHTSFFDI (66 aa)), are a transit peptide targeting the mitochondrion.

The protein belongs to the GatB/GatE family. GatB subfamily. Subunit of the heterotrimeric GatFAB amidotransferase (AdT) complex, composed of A, B and F subunits.

The protein localises to the mitochondrion. The catalysed reaction is L-glutamyl-tRNA(Gln) + L-glutamine + ATP + H2O = L-glutaminyl-tRNA(Gln) + L-glutamate + ADP + phosphate + H(+). Its function is as follows. Allows the formation of correctly charged Gln-tRNA(Gln) through the transamidation of misacylated Glu-tRNA(Gln) in the mitochondria. The reaction takes place in the presence of glutamine and ATP through an activated gamma-phospho-Glu-tRNA(Gln). The sequence is that of Glutamyl-tRNA(Gln) amidotransferase subunit B, mitochondrial from Zygosaccharomyces rouxii (strain ATCC 2623 / CBS 732 / NBRC 1130 / NCYC 568 / NRRL Y-229).